A 393-amino-acid polypeptide reads, in one-letter code: S-adenosylmethionine synthase (393 aa).

His-16 is a binding site for ATP. Residue Asp-18 participates in Mg(2+) binding. Glu-44 contributes to the K(+) binding site. Glu-57 and Gln-100 together coordinate L-methionine. Residues 100–110 (QSPDIVMGVDG) are flexible loop. ATP is bound by residues 165–167 (DAK), 231–232 (RF), Asp-240, 246–247 (RK), and Lys-267. L-methionine is bound at residue Asp-240. Position 271 (Lys-271) interacts with L-methionine.

This sequence belongs to the AdoMet synthase family. In terms of assembly, homotetramer; dimer of dimers. Requires Mg(2+) as cofactor. K(+) serves as cofactor.

It is found in the cytoplasm. The catalysed reaction is L-methionine + ATP + H2O = S-adenosyl-L-methionine + phosphate + diphosphate. It functions in the pathway amino-acid biosynthesis; S-adenosyl-L-methionine biosynthesis; S-adenosyl-L-methionine from L-methionine: step 1/1. Its function is as follows. Catalyzes the formation of S-adenosylmethionine (AdoMet) from methionine and ATP. The overall synthetic reaction is composed of two sequential steps, AdoMet formation and the subsequent tripolyphosphate hydrolysis which occurs prior to release of AdoMet from the enzyme. This chain is S-adenosylmethionine synthase, found in Coxiella burnetii (strain Dugway 5J108-111).